The primary structure comprises 134 residues: Cytochrome b (134 aa).

A run of 3 helical transmembrane segments spans residues 33–53 (FGSL…FLAM), 77–98 (WLIR…FLHV), and 113–133 (WNIG…GYVL). Heme b contacts are provided by histidine 83 and histidine 97.

It belongs to the cytochrome b family. The cytochrome bc1 complex contains 11 subunits: 3 respiratory subunits (MT-CYB, CYC1 and UQCRFS1), 2 core proteins (UQCRC1 and UQCRC2) and 6 low-molecular weight proteins (UQCRH/QCR6, UQCRB/QCR7, UQCRQ/QCR8, UQCR10/QCR9, UQCR11/QCR10 and a cleavage product of UQCRFS1). This cytochrome bc1 complex then forms a dimer. It depends on heme b as a cofactor.

Its subcellular location is the mitochondrion inner membrane. Functionally, component of the ubiquinol-cytochrome c reductase complex (complex III or cytochrome b-c1 complex) that is part of the mitochondrial respiratory chain. The b-c1 complex mediates electron transfer from ubiquinol to cytochrome c. Contributes to the generation of a proton gradient across the mitochondrial membrane that is then used for ATP synthesis. This Sorex shinto sadonis (Sado shrew) protein is Cytochrome b (MT-CYB).